The following is a 318-amino-acid chain: Pheromone-regulated membrane protein 5 (318 aa).

The chain crosses the membrane as a helical span at residues 78–98; it reads FIXVGGIAGVIFLAILLWWVI. Serine 129 carries the post-translational modification Phosphoserine. Positions 238-247 are enriched in low complexity; sequence TISSSSASSL. A disordered region spans residues 238-318; sequence TISSSSASSL…HMLEGKEQDE (81 aa). The segment covering 250–261 has biased composition (basic and acidic residues); it reads GNEKEVGEDIRK. Over residues 276-285 the composition is skewed to polar residues; that stretch reads SPESDGSVNR. A phosphoserine mark is found at serine 279, serine 282, and serine 288. Residues 309-318 are compositionally biased toward basic and acidic residues; it reads HMLEGKEQDE. Lysine 314 is covalently cross-linked (Glycyl lysine isopeptide (Lys-Gly) (interchain with G-Cter in ubiquitin)).

Belongs to the PRM5 family.

The protein resides in the membrane. This is Pheromone-regulated membrane protein 5 (PRM5) from Saccharomyces cerevisiae (strain FostersO) (Baker's yeast).